Reading from the N-terminus, the 159-residue chain is Phosphopantetheine adenylyltransferase (159 aa).

Residue S8 coordinates substrate. Residues 8-9 (SF) and H16 each bind ATP. The substrate site is built by K40, L72, and R86. Residues 87–89 (GLR), E97, and 122–128 (YSFISSS) contribute to the ATP site.

It belongs to the bacterial CoaD family. In terms of assembly, homohexamer. The cofactor is Mg(2+).

Its subcellular location is the cytoplasm. It catalyses the reaction (R)-4'-phosphopantetheine + ATP + H(+) = 3'-dephospho-CoA + diphosphate. The protein operates within cofactor biosynthesis; coenzyme A biosynthesis; CoA from (R)-pantothenate: step 4/5. Its function is as follows. Reversibly transfers an adenylyl group from ATP to 4'-phosphopantetheine, yielding dephospho-CoA (dPCoA) and pyrophosphate. The chain is Phosphopantetheine adenylyltransferase from Thermosipho melanesiensis (strain DSM 12029 / CIP 104789 / BI429).